Here is a 496-residue protein sequence, read N- to C-terminus: Fizzy-related protein homolog (496 aa).

Disordered stretches follow at residues 28–51, 64–88, and 105–166; these read RRTL…FIPS, INEN…GKDG, and EKVQ…SPRK. Residue Thr-32 is modified to Phosphothreonine. The segment covering 32–42 has biased composition (polar residues); it reads TPASSPVSSPS. Ser-36 is modified (phosphoserine). Positions 47 to 52 are involved in APC/FZR1 E3 ubiquitin-protein ligase complex activity; sequence RFIPSR. Lys-69 carries the N6-acetyllysine modification. Basic and acidic residues-rich tracts occupy residues 76-86 and 106-126; these read KAKDATSDNGK and KVQD…EKKG. Residues Ser-133, Ser-138, Ser-146, and Ser-151 each carry the phosphoserine modification. Residues 146–160 are compositionally biased toward polar residues; sequence SPYSLSPVSNKSQKL. An N6-acetyllysine modification is found at Lys-159. 7 WD repeats span residues 182-222, 227-266, 269-306, 311-350, 353-395, 397-438, and 441-480; these read PELQ…VTRL, VEGD…KLSM, GHTA…LQSE, GHRQ…PVQQ, EHLA…PLQC, DTGS…QVAK, and GHSY…RSTK.

It belongs to the WD repeat CDC20/Fizzy family. In terms of assembly, the unphosphorylated form interacts with APC/C during mitosis. Interacts with NINL. Interacts (in complex with the anaphase promoting complex APC) with MAD2L2; inhibits FZR1-mediated APC/C activation. Interacts with SIRT2 and USP37. Interacts (via WD repeats) with MAK. Interacts with RBBP8/CtIP; this interaction leads to RBBP8 proteasomal degradation. Interacts with HECW2. Interacts with SASS6; the interaction is regulated by CENATAC and leads to SASS6 proteasomal degradation. Interacts (via N-terminus) with CCNF. Interacts with CDC6. Interacts with TK1 (via the KEN box). Acetylated. Deacetylated by SIRT2 at Lys-69 and Lys-159; deacetylation enhances the interaction of FZR1 with CDC27, leading to activation of anaphase promoting complex/cyclosome (APC/C). In terms of processing, following DNA damage, it is dephosphorylated by CDC14B in G2 phase, leading to its reassociation with the APC/C, and allowing an efficient G2 DNA damage checkpoint. Phosphorylated by MAK. Post-translationally, ubiquitinated by the SCF(CCNF) E3 ubiquitin-protein ligase complex; leading to its degradation by the proteasome. As to expression, isoform 2 is expressed at high levels in heart, liver, spleen and some cancer cell lines whereas isoform 3 is expressed only at low levels in these tissues.

It is found in the nucleus. Its subcellular location is the cytoplasm. It functions in the pathway protein modification; protein ubiquitination. Functionally, substrate-specific adapter for the anaphase promoting complex/cyclosome (APC/C) E3 ubiquitin-protein ligase complex. Associates with the APC/C in late mitosis, in replacement of CDC20, and activates the APC/C during anaphase and telophase. The APC/C remains active in degrading substrates to ensure that positive regulators of the cell cycle do not accumulate prematurely. At the G1/S transition FZR1 is phosphorylated, leading to its dissociation from the APC/C. Following DNA damage, it is required for the G2 DNA damage checkpoint: its dephosphorylation and reassociation with the APC/C leads to the ubiquitination of PLK1, preventing entry into mitosis. Acts as an adapter for APC/C to target the DNA-end resection factor RBBP8/CtIP for ubiquitination and subsequent proteasomal degradation. Through the regulation of RBBP8/CtIP protein turnover, may play a role in DNA damage response, favoring DNA double-strand repair through error-prone non-homologous end joining (NHEJ) over error-free, RBBP8-mediated homologous recombination (HR). The sequence is that of Fizzy-related protein homolog from Homo sapiens (Human).